The sequence spans 335 residues: Transmembrane protein 120B (335 aa).

Residues 1 to 39 (MSLQKCQEEWGELEKEFQQLQETHKVYKQKLEELNGLQN) are a coiled coil. 6 helical membrane-spanning segments follow: residues 100–122 (GLYLNLVLGNVNVTLLSNQAKFA), 130–150 (FKLYLTIILLLGAITCRFVLH), 157–177 (VFNFLLVWYYCTLTIRESILI), 193–213 (VSTFLSGVMLTWPDGLMYQIF), 268–288 (FLLPFLFFGHFWQLYNAITLF), and 300–320 (QVFVLALTFLLLFLGNFLTTL).

This sequence belongs to the TMEM120 family.

It localises to the nucleus inner membrane. Functionally, necessary for efficient adipogenesis. Does not show ion channel activity. In Xenopus tropicalis (Western clawed frog), this protein is Transmembrane protein 120B (tmem120b).